The following is an 89-amino-acid chain: Small ribosomal subunit protein bS20 (89 aa).

It belongs to the bacterial ribosomal protein bS20 family.

In terms of biological role, binds directly to 16S ribosomal RNA. The protein is Small ribosomal subunit protein bS20 of Xanthobacter autotrophicus (strain ATCC BAA-1158 / Py2).